We begin with the raw amino-acid sequence, 116 residues long: MSHLLDSVDAASLRSDVPAFRPGDTVNVHVRVIEGNRSRVQQFKGVVIRRQGAGVRETFTVRKVSFSVGVERTFPVHTPIVEKIELVTRGDVRRAKLYYLRELRGKAAKIKEKRDS.

This sequence belongs to the bacterial ribosomal protein bL19 family.

Functionally, this protein is located at the 30S-50S ribosomal subunit interface and may play a role in the structure and function of the aminoacyl-tRNA binding site. This chain is Large ribosomal subunit protein bL19 (rplS), found in Streptomyces lividans.